The primary structure comprises 327 residues: MEIKLIVLSLALLLDRFIGDLPLLWQRISHPVVLLGKAISWGEKNFNDSSLPPSTLRRNGMWLTVGLVAACIFAGLVIRSILPHAGTAGAIAEVVIVAILLAQKSLADHVQAVAQALRDDGIEGGRKAVSMIVGRNPDRLDEGGVSRAAIESLAENASDGIVAPAFWFLVGGLPGLFAYKFINTADSMIGHLNDRYRDFGRFAAKLDDVANYIPARLTGLLAALATSLGHGREAGRQALSIMCRDARLHRSPNAGWPEAAFAGALGLALAGPRQYGAETVEGPMLNATGKREAEARDIDAALVLFWSTMSLMTGLVIAASLVGLFVG.

A run of 4 helical transmembrane segments spans residues 61-78 (MWLT…GLVI), 80-102 (SILP…ILLA), 160-182 (GIVA…YKFI), and 300-322 (AALV…ASLV).

This sequence belongs to the CobD/CbiB family.

It is found in the cell membrane. Its pathway is cofactor biosynthesis; adenosylcobalamin biosynthesis. In terms of biological role, converts cobyric acid to cobinamide by the addition of aminopropanol on the F carboxylic group. In Brucella melitensis biotype 1 (strain ATCC 23456 / CCUG 17765 / NCTC 10094 / 16M), this protein is Cobalamin biosynthesis protein CobD.